Here is a 481-residue protein sequence, read N- to C-terminus: MAKEALIVKTTPLPQSRISFELEIPSETCKTCVNETISTISRSAKIPGFRLGKIPKQVLIQRIGITQLHASALEKIIDKSWQEALKIKSIEPLSEPELVDGFESLLAKFSPEKSLKFTLQTDVAPELKLKKSKGLSVEISKTKFDPKSVDEALEKSRSQFANIIPVTNRAAKLGDIAVVSFKGKYKDSGKEIDGGTSESMDLELEKNKMIPGFVEGIVKMKIGDTKTLNLKFPEDYSHEDSRGKEAIFEVSLKDLKEKELPELNDDFAKQSGNKESLKELKKDIEKQLKENFEKTQKDIKIEALLDALTNELVAEIPKSMIDIEVRNNIEQTAQRFAQQGLDVKSTFTPELVKSLSESTRPQAEKNVQRNLALKALAEKENITVEKDEIDLKMKDYEDAISQSSKQIDIKKLTEVISKDLLKEKLIIWLEENSEVKEKTTKASQASKTTKAKKTTTKTTKATKTATKTTKATKTQNKKEKK.

The region spanning 174-261 (GDIAVVSFKG…LKDLKEKELP (88 aa)) is the PPIase FKBP-type domain. A disordered region spans residues 435–481 (VKEKTTKASQASKTTKAKKTTTKTTKATKTATKTTKATKTQNKKEKK). A compositionally biased stretch (low complexity) spans 456–474 (TKTTKATKTATKTTKATKT).

This sequence belongs to the FKBP-type PPIase family. Tig subfamily.

It localises to the cytoplasm. The catalysed reaction is [protein]-peptidylproline (omega=180) = [protein]-peptidylproline (omega=0). Functionally, involved in protein export. Acts as a chaperone by maintaining the newly synthesized protein in an open conformation. Functions as a peptidyl-prolyl cis-trans isomerase. This is Trigger factor from Prochlorococcus marinus (strain MIT 9312).